Reading from the N-terminus, the 1005-residue chain is Mediator of RNA polymerase II transcription subunit 24 (1005 aa).

It belongs to the Mediator complex subunit 24 family. As to quaternary structure, component of the Mediator complex.

It is found in the nucleus. Component of the Mediator complex, a coactivator involved in the regulated transcription of nearly all RNA polymerase II-dependent genes. Mediator functions as a bridge to convey information from gene-specific regulatory proteins to the basal RNA polymerase II transcription machinery. Mediator is recruited to promoters by direct interactions with regulatory proteins and serves as a scaffold for the assembly of a functional preinitiation complex with RNA polymerase II and the general transcription factors. The polypeptide is Mediator of RNA polymerase II transcription subunit 24 (MED24) (Aedes aegypti (Yellowfever mosquito)).